A 479-amino-acid chain; its full sequence is Monodictyphenone cluster transcriptional coactivator mdpA (479 aa).

An HTH iclR-type domain is found at 77 to 147 (LAVQNQLLAC…DPGQVAHSAL (71 aa)). Residues 107–126 (IKDVAELAGVPETHLSRIIR) constitute a DNA-binding region (H-T-H motif). 2 disordered regions span residues 281–305 (GPTA…HKHD) and 314–333 (TAST…TTNS). The segment covering 289-298 (HPNPIRPPTP) has biased composition (pro residues). A compositionally biased stretch (low complexity) spans 314-323 (TASTTPASSH).

The protein localises to the nucleus. Transcriptional coactivator; part of the gene cluster that mediates the biosynthesis of monodictyphenone, a prenyl xanthone derivative. With mdpE, coregulates the production of monodictyphenone. The chain is Monodictyphenone cluster transcriptional coactivator mdpA from Emericella nidulans (strain FGSC A4 / ATCC 38163 / CBS 112.46 / NRRL 194 / M139) (Aspergillus nidulans).